Consider the following 645-residue polypeptide: 1,4-alpha-glucan branching enzyme GlgB (645 aa).

Asp-309 serves as the catalytic Nucleophile. Residue Glu-352 is the Proton donor of the active site. Positions 619-645 (VKTRKGSKKQDGSKTKVRSNVTSRGKR) are disordered. Polar residues predominate over residues 636–645 (RSNVTSRGKR).

The protein belongs to the glycosyl hydrolase 13 family. GlgB subfamily. As to quaternary structure, monomer.

It carries out the reaction Transfers a segment of a (1-&gt;4)-alpha-D-glucan chain to a primary hydroxy group in a similar glucan chain.. It functions in the pathway glycan biosynthesis; glycogen biosynthesis. Its function is as follows. Catalyzes the formation of the alpha-1,6-glucosidic linkages in glycogen by scission of a 1,4-alpha-linked oligosaccharide from growing alpha-1,4-glucan chains and the subsequent attachment of the oligosaccharide to the alpha-1,6 position. The protein is 1,4-alpha-glucan branching enzyme GlgB of Bacillus mycoides (strain KBAB4) (Bacillus weihenstephanensis).